The following is a 1141-amino-acid chain: DNA-directed RNA polymerase subunit beta (1141 aa).

A disordered region spans residues 1117–1141; sequence GINISREEPPGQLDDTPDTFSRGGM.

This sequence belongs to the RNA polymerase beta chain family. As to quaternary structure, the RNAP catalytic core consists of 2 alpha, 1 beta, 1 beta' and 1 omega subunit. When a sigma factor is associated with the core the holoenzyme is formed, which can initiate transcription.

It carries out the reaction RNA(n) + a ribonucleoside 5'-triphosphate = RNA(n+1) + diphosphate. In terms of biological role, DNA-dependent RNA polymerase catalyzes the transcription of DNA into RNA using the four ribonucleoside triphosphates as substrates. This chain is DNA-directed RNA polymerase subunit beta, found in Rubrobacter xylanophilus (strain DSM 9941 / JCM 11954 / NBRC 16129 / PRD-1).